A 160-amino-acid chain; its full sequence is Cytochrome b6-f complex subunit 4 (160 aa).

Helical transmembrane passes span 36–56 (ILYMFPVVILGILACDVGLSI), 95–115 (LVGVLSMASVPAGLITVPFIE), and 127–147 (PIATSVFLVGTIVAVWLGIGA).

The protein belongs to the cytochrome b family. PetD subfamily. In terms of assembly, the 4 large subunits of the cytochrome b6-f complex are cytochrome b6, subunit IV (17 kDa polypeptide, petD), cytochrome f and the Rieske protein, while the 4 small subunits are petG, petL, petM and petN. The complex functions as a dimer.

It localises to the plastid. It is found in the chloroplast thylakoid membrane. In terms of biological role, component of the cytochrome b6-f complex, which mediates electron transfer between photosystem II (PSII) and photosystem I (PSI), cyclic electron flow around PSI, and state transitions. The chain is Cytochrome b6-f complex subunit 4 from Gracilaria tenuistipitata var. liui (Red alga).